We begin with the raw amino-acid sequence, 620 residues long: 1-deoxy-D-xylulose-5-phosphate synthase (620 aa).

Thiamine diphosphate-binding positions include His80 and 121 to 123 (GHS). Asp152 is a binding site for Mg(2+). Residues 153 to 154 (GA), Asn181, Tyr288, and Glu370 contribute to the thiamine diphosphate site. Mg(2+) is bound at residue Asn181.

Belongs to the transketolase family. DXPS subfamily. In terms of assembly, homodimer. Requires Mg(2+) as cofactor. The cofactor is thiamine diphosphate.

The catalysed reaction is D-glyceraldehyde 3-phosphate + pyruvate + H(+) = 1-deoxy-D-xylulose 5-phosphate + CO2. The protein operates within metabolic intermediate biosynthesis; 1-deoxy-D-xylulose 5-phosphate biosynthesis; 1-deoxy-D-xylulose 5-phosphate from D-glyceraldehyde 3-phosphate and pyruvate: step 1/1. Catalyzes the acyloin condensation reaction between C atoms 2 and 3 of pyruvate and glyceraldehyde 3-phosphate to yield 1-deoxy-D-xylulose-5-phosphate (DXP). The polypeptide is 1-deoxy-D-xylulose-5-phosphate synthase (Escherichia coli O157:H7).